Reading from the N-terminus, the 199-residue chain is Nucleoside triphosphate pyrophosphatase (199 aa).

The active-site Proton acceptor is the D72.

The protein belongs to the Maf family. It depends on a divalent metal cation as a cofactor.

The protein resides in the cytoplasm. It carries out the reaction a ribonucleoside 5'-triphosphate + H2O = a ribonucleoside 5'-phosphate + diphosphate + H(+). The enzyme catalyses a 2'-deoxyribonucleoside 5'-triphosphate + H2O = a 2'-deoxyribonucleoside 5'-phosphate + diphosphate + H(+). Its function is as follows. Nucleoside triphosphate pyrophosphatase. May have a dual role in cell division arrest and in preventing the incorporation of modified nucleotides into cellular nucleic acids. This chain is Nucleoside triphosphate pyrophosphatase, found in Synechococcus elongatus (strain ATCC 33912 / PCC 7942 / FACHB-805) (Anacystis nidulans R2).